The following is a 441-amino-acid chain: Maltokinase (441 aa).

The protein belongs to the aminoglycoside phosphotransferase family. Monomer.

The enzyme catalyses D-maltose + ATP = alpha-maltose 1-phosphate + ADP + H(+). The protein operates within glycan biosynthesis; glycogen biosynthesis. Its function is as follows. Catalyzes the ATP-dependent phosphorylation of maltose to maltose 1-phosphate. Is involved in a branched alpha-glucan biosynthetic pathway from trehalose, together with TreS, GlgE and GlgB. The protein is Maltokinase (mak) of Mycolicibacterium vanbaalenii (strain DSM 7251 / JCM 13017 / BCRC 16820 / KCTC 9966 / NRRL B-24157 / PYR-1) (Mycobacterium vanbaalenii).